Consider the following 686-residue polypeptide: Translation initiation factor IF-2 (686 aa).

The disordered stretch occupies residues 35–99 (MSTVEDETAE…EHGQKDTDRR (65 aa)). Positions 50 to 68 (LQEEDKPEEKISKKEPDKK) are enriched in basic and acidic residues. A compositionally biased stretch (basic residues) spans 69 to 79 (DRKKTKGKKQM). Positions 87–99 (EGTEHGQKDTDRR) are enriched in basic and acidic residues. In terms of domain architecture, tr-type G spans 186-355 (LRPPIVTVMG…LLVAEMEELK (170 aa)). Residues 195–202 (GHVDHGKT) are G1. 195–202 (GHVDHGKT) serves as a coordination point for GTP. The tract at residues 220–224 (GITQH) is G2. Positions 241-244 (DTPG) are G3. GTP-binding positions include 241–245 (DTPGH) and 295–298 (NKVD). The G4 stretch occupies residues 295–298 (NKVD). The segment at 331–333 (SAL) is G5.

It belongs to the TRAFAC class translation factor GTPase superfamily. Classic translation factor GTPase family. IF-2 subfamily.

Its subcellular location is the cytoplasm. Its function is as follows. One of the essential components for the initiation of protein synthesis. Protects formylmethionyl-tRNA from spontaneous hydrolysis and promotes its binding to the 30S ribosomal subunits. Also involved in the hydrolysis of GTP during the formation of the 70S ribosomal complex. The protein is Translation initiation factor IF-2 of Halothermothrix orenii (strain H 168 / OCM 544 / DSM 9562).